The sequence spans 47 residues: Ruminococcin-A (47 aa).

Residues 1-23 (MRNDVLTLTNPMEEKELEQILGG) form the signal peptide. 2 positions are modified to 2,3-didehydrobutyrine: Thr-30 and Thr-39. The beta-methyllanthionine (Thr-Cys) cross-link spans 30–35 (TISHEC). The segment at residues 32-46 (SHECNMNTWQFLFTC) is a cross-link (lanthionine (Ser-Cys)). The beta-methyllanthionine (Thr-Cys) cross-link spans 45-47 (TCC).

Maturation of lantibiotics involves the enzymatic conversion of Thr, and Ser into dehydrated AA and the formation of thioether bonds with cysteine. This is followed by membrane translocation and cleavage of the modified precursor. In terms of processing, it is not established whether the 2,3-didehydrobutyrine is the E- or Z-isomer.

The protein localises to the secreted. Its function is as follows. Lanthionine-containing peptide antibiotic (lantibiotic) active on Gram-positive bacteria. The bactericidal activity of lantibiotics is based on depolarization of energized bacterial cytoplasmic membranes, initiated by the formation of aqueous transmembrane pores. Ruminococcin A is a broad spectrum bacteriocin exhibiting activity against a wide range of pathogenic clostridia and B.longum. This Mediterraneibacter gnavus (Ruminococcus gnavus) protein is Ruminococcin-A (rumA1).